A 713-amino-acid polypeptide reads, in one-letter code: F-box/WD repeat-containing protein 7 (713 aa).

A disordered region spans residues 1 to 150 (MNQELLSVGS…DEHTHNSNVT (150 aa)). Serine 26 carries the post-translational modification Phosphoserine. A compositionally biased stretch (basic and acidic residues) spans 46–55 (RHQEEEHTAR). The segment covering 69–84 (QNDSQQGQVEENNNRF) has biased composition (polar residues). The span at 87-135 (VDEDSSGNQEEQEEDEEHAGEQEEEEEEEEEEEEEEEMDQESDDFDQSD) shows a compositional bias: acidic residues. The stretch at 94–136 (NQEEQEEDEEHAGEQEEEEEEEEEEEEEEEMDQESDDFDQSDD) forms a coiled coil. Over residues 136 to 145 (DSSREDEHTH) the composition is skewed to basic and acidic residues. The residue at position 211 (threonine 211) is a Phosphothreonine. Serine 233 carries the phosphoserine modification. In terms of domain architecture, F-box spans 284–330 (RDFISLLPKELALYVLSFLEPKDLLQAAQTCRYWRILAEDNLLWREK). 7 WD repeats span residues 384-424 (GHDD…RTLV), 426-462 (HTGG…CIHT), 465-504 (GHTS…HVLM), 506-542 (HVAA…CLHT), 545-584 (GHTN…HTLT), 586-624 (HQSL…QTLQ), and 628-665 (KHQS…FIRN).

In terms of assembly, homodimer; homodimerization plays a role in substrate binding and/or ubiquitination and degradation. Component of the SCF(FBXW7) complex consisting of CUL1, RBX1, SKP1 and FBXW7. Interacts (via F-box domain) with SKP1. Interacts (via F-box domain) with pseudophosphatase STYX; the interaction is direct and prevents FBXW7 interaction with SKP1. Interacts with cyclin-E (CCNE1 or CCNE2). Interacts with PSEN1. Forms a trimeric complex with NOTCH1 and SGK1. Interacts with NOTCH1 intracellular domain/NICD and NOTCH4 intracellular domain/NICD. Interacts with NOTCH2 intracellular domain (N2ICD). Interacts with MYC (when phosphorylated). Interacts with USP28, counteracting ubiquitination of MYC. Interacts (when phosphorylated at Thr-211) with PIN1, disrupting FBXW7 dimerization and promoting FBXW7 autoubiquitination and degradation. Interacts with UBE2QL1. Interacts with FAM83D; promotes FBXW7 degradation. Interacts with MYCN; FBXW7 competes with AURKA for binding to unphosphorylated MYCN but not for binding to phosphorylated MYCN. Interacts with JUN. Found in a complex with JUN and PRR7. Interacts with JUN and PRR7; the interaction inhibits ubiquitination-mediated JUN degradation, promoting its phosphorylation and transcriptional activity. Interacts with NFE2L1. Interacts with NR1D1. Interacts with RICTOR; mediates RICTOR ubiquitination and degradation. Phosphorylation at Thr-211 promotes interaction with PIN1, leading to disrupt FBXW7 dimerization and promoting FBXW7 autoubiquitination and degradation. Phosphorylated by ATM at Ser-26 in response to DNA damage, promoting recruitment to DNA damage sites and 'Lys-63'-linked ubiquitination of phosphorylated XRCC4. In terms of processing, ubiquitinated: autoubiquitinates following phosphorylation at Thr-211 and subsequent interaction with PIN1. Ubiquitination leads to its degradation.

It localises to the nucleus. The protein resides in the nucleoplasm. It is found in the chromosome. It participates in protein modification; protein ubiquitination. In terms of biological role, substrate recognition component of a SCF (SKP1-CUL1-F-box protein) E3 ubiquitin-protein ligase complex which mediates the ubiquitination and subsequent proteasomal degradation of target proteins. Recognizes and binds phosphorylated sites/phosphodegrons within target proteins and thereafter brings them to the SCF complex for ubiquitination. Identified substrates include cyclin-E (CCNE1 or CCNE2), JUN, MYC, NOTCH1 released notch intracellular domain (NICD), NOTCH2, MCL1, MLST8, RICTOR and probably PSEN1. Acts as a negative regulator of JNK signaling by binding to phosphorylated JUN and promoting its ubiquitination and subsequent degradation. SCF(FBXW7) complex mediates the ubiquitination and subsequent degradation of NFE2L1. Involved in bone homeostasis and negative regulation of osteoclast differentiation. Regulates the amplitude of the cyclic expression of hepatic core clock genes and genes involved in lipid and glucose metabolism via ubiquitination and proteasomal degradation of their transcriptional repressor NR1D1; CDK1-dependent phosphorylation of NR1D1 is necessary for SCF(FBXW7)-mediated ubiquitination. Also able to promote 'Lys-63'-linked ubiquitination in response to DNA damage. The SCF(FBXW7) complex facilitates double-strand break repair following phosphorylation by ATM: phosphorylation promotes localization to sites of double-strand breaks and 'Lys-63'-linked ubiquitination of phosphorylated XRCC4, enhancing DNA non-homologous end joining. In Rattus norvegicus (Rat), this protein is F-box/WD repeat-containing protein 7.